The following is a 1249-amino-acid chain: ATP-dependent helicase/nuclease subunit A (1249 aa).

In terms of domain architecture, UvrD-like helicase ATP-binding spans 5–482 (TNYTPSQQAV…IVLAENFRSV (478 aa)). 26 to 33 (ASAGSGKT) serves as a coordination point for ATP. Residues 521–811 (ADMPQTTNLL…NVMTIHGSKG (291 aa)) form the UvrD-like helicase C-terminal domain.

This sequence belongs to the helicase family. AddA subfamily. As to quaternary structure, heterodimer of AddA and AddB/RexB. The cofactor is Mg(2+).

It carries out the reaction Couples ATP hydrolysis with the unwinding of duplex DNA by translocating in the 3'-5' direction.. The enzyme catalyses ATP + H2O = ADP + phosphate + H(+). In terms of biological role, the heterodimer acts as both an ATP-dependent DNA helicase and an ATP-dependent, dual-direction single-stranded exonuclease. Recognizes the chi site generating a DNA molecule suitable for the initiation of homologous recombination. The AddA nuclease domain is required for chi fragment generation; this subunit has the helicase and 3' -&gt; 5' nuclease activities. The polypeptide is ATP-dependent helicase/nuclease subunit A (Lactiplantibacillus plantarum (strain ATCC BAA-793 / NCIMB 8826 / WCFS1) (Lactobacillus plantarum)).